Consider the following 747-residue polypeptide: H(+)/Cl(-) exchange transporter 4 (747 aa).

A required for localization in the endoplasmic reticulum region spans residues 1–50 (MDFLDEPFPDVGTYEDFHTIDWLREKSRDTDRHRKITSKSKESIWEFIKS). Residues 1–54 (MDFLDEPFPDVGTYEDFHTIDWLREKSRDTDRHRKITSKSKESIWEFIKSLLDA) are Cytoplasmic-facing. Transmembrane regions (helical) follow at residues 55–92 (WSGW…VCLS) and 138–161 (LNYL…VRVF). The short motif at 167-171 (GSGIP) is the Selectivity filter part_1 element. Ser-168 contributes to the chloride binding site. Residues 170 to 177 (IPEIKTIL) constitute an intramembrane region (helical). The next 2 membrane-spanning stretches (helical) occupy residues 187 to 205 (GKWT…VSSG) and 211 to 230 (EGPL…SLFS). Residues 209-213 (GKEGP) carry the Selectivity filter part_2 motif. Intramembrane regions (helical) lie at residues 242-254 (VLSA…VSVA) and 258-266 (PIGGVLFSL). Helical transmembrane passes span 278 to 296 (LWRS…RSIN), 320 to 345 (FPFI…AWCR), 352 to 372 (LGKY…IIAY), 429 to 449 (MWQL…TFGM), and 454 to 473 (GLFI…VGIG). Positions 454-458 (GLFIP) match the Selectivity filter part_3 motif. Phe-456 is a chloride binding site. 2 consecutive intramembrane regions (helical) follow at residues 501-515 (GLYA…LGGV) and 519-530 (TVSLVVIMFELT). An intramembrane region (note=Loop between two helices) is located at residues 531-534 (GGLE). The chain crosses the membrane as a helical span at residues 535-553 (YIVPLMAAAVTSKWVADAF). Topologically, residues 554-747 (GKEGIYEAHI…NQDPESIIFN (194 aa)) are cytoplasmic. Tyr-559 is a binding site for chloride. In terms of domain architecture, CBS 1 spans 587-653 (MRPRRGEPPL…AIKNARQRQE (67 aa)). ATP contacts are provided by residues Ser-597 and 618–620 (YNG). The tract at residues 654-683 (GIVSNSIMYFTEEPPELPANSPHPLKLRRI) is required for localization in the endoplasmic reticulum. Residues 684-742 (LNLSPFTVTDHTPMETVVDIFRKLGLRQCLVTRSGRLLGIITKKDVLRHMAQMANQDPE) form the CBS 2 domain. An ATP-binding site is contributed by 725–728 (TKKD).

It belongs to the chloride channel (TC 2.A.49) family. ClC-4/CLCN4 subfamily. In terms of tissue distribution, strongly expressed in liver and brain, but also in heart, muscle, kidney and spleen.

Its subcellular location is the early endosome membrane. The protein localises to the late endosome membrane. The protein resides in the endoplasmic reticulum membrane. It localises to the lysosome membrane. It is found in the recycling endosome membrane. Strongly outwardly rectifying, electrogenic H(+)/Cl(-)exchanger which mediates the exchange of chloride ions against protons. The CLC channel family contains both chloride channels and proton-coupled anion transporters that exchange chloride or another anion for protons. The presence of conserved gating glutamate residues is typical for family members that function as antiporters. In Rattus norvegicus (Rat), this protein is H(+)/Cl(-) exchange transporter 4 (Clcn4).